We begin with the raw amino-acid sequence, 225 residues long: Transmembrane protein 225 (225 aa).

At 1-8 (MVHVSNRS) the chain is on the cytoplasmic side. A helical transmembrane segment spans residues 9–29 (IQGMNILFSSWAVVLMVMGIT). The Extracellular segment spans residues 30–72 (LDKWVELISEDERAKMNHSPWMMCCPALWPEDDLKVVRIMMTS). A helical membrane pass occupies residues 73-93 (SLGLSFLLNLILGMKFTYLIP). Over 94–99 (QNKYIQ) the chain is Cytoplasmic. The chain crosses the membrane as a helical span at residues 100–120 (LFTTILSFFSGISLLWALILY). Residues 121–136 (HNKLKQGQSMHFSSYR) are Extracellular-facing. A helical transmembrane segment spans residues 137–157 (ITWIMYTAYLNVFFLSVCGVL). The Cytoplasmic portion of the chain corresponds to 158–225 (SLLECKLSTS…VQTRHVTWAL (68 aa)). Positions 219–223 (RHVTW) match the RVxF motif.

As to quaternary structure, interacts (via RVxF motif) with PPP1CC.

It is found in the cytoplasmic vesicle. Its subcellular location is the secretory vesicle. It localises to the acrosome membrane. Functionally, probably inhibits protein phosphatase 1 (PP1) in sperm via binding to catalytic subunit PPP1CC. This chain is Transmembrane protein 225 (TMEM225), found in Homo sapiens (Human).